The sequence spans 461 residues: MTQEFDCVVIGAGPSGYVAAITAAQSKLRTALIEEDQAGGTCLNRGCIPSKALIAGANVVSHIKHAEQFGIHVDGYTIDYPAMAKRKNTVVQGIRQGLEGLIRSNKITVLKGTGSLVSSTEVKVIGQDTTIIKANHIILATGSEPRPFPGVPFSSRILSSTGILELEVLPKKLAIIGGGVIGCEFASLFHTLGVEITVIEALDHILAVNNKEVSQTVTNKFTKQGIRILTKASISAIEESQNQVRITVNDQVEEFDYVLVAIGRQFNTASIGLDNAGVIRDDRGVIPVDETMRTNVPNIYAIGDITGKWLLAHVASHQGVIAAKNISGHHEVMDYSAIPSVIFTHPEIAMVGLSLQEAEQQNLPAKLTKFPFKAIGKAVALGASDGFAAIVSHEITQQILGAYVIGPHASSLIGEMTLAIRNELTLPCIYETVHAHPTLSEVWAEGALLATNHPLHFPPKS.

FAD-binding positions include glutamate 34 to cysteine 42, lysine 51, and glycine 114. A disulfide bond links cysteine 42 and cysteine 47. NAD(+) is bound by residues glycine 177–isoleucine 181, glutamate 200, and alanine 261–arginine 264. 2 residues coordinate FAD: aspartate 304 and alanine 312. Histidine 436 acts as the Proton acceptor in catalysis.

The protein belongs to the class-I pyridine nucleotide-disulfide oxidoreductase family. It depends on FAD as a cofactor.

Its subcellular location is the cytoplasm. It carries out the reaction N(6)-[(R)-dihydrolipoyl]-L-lysyl-[protein] + NAD(+) = N(6)-[(R)-lipoyl]-L-lysyl-[protein] + NADH + H(+). The branched-chain alpha-keto dehydrogenase complex catalyzes the overall conversion of alpha-keto acids to acyl-CoA and CO(2). It contains multiple copies of 3 enzymatic components: branched-chain alpha-keto acid decarboxylase (E1), lipoamide acyltransferase (E2) and lipoamide dehydrogenase (E3). The polypeptide is Dihydrolipoyl dehydrogenase (lpdA) (Chlamydia pneumoniae (Chlamydophila pneumoniae)).